The following is a 55-amino-acid chain: Large ribosomal subunit protein eL37 (55 aa).

Zn(2+) is bound by residues C20, C23, C35, and C38. A C4-type zinc finger spans residues 20–38; that stretch reads CRRCGKNSYHKRHHRCSSC.

The protein belongs to the eukaryotic ribosomal protein eL37 family. Zn(2+) is required as a cofactor.

Functionally, binds to the 23S rRNA. This Cenarchaeum symbiosum (strain A) protein is Large ribosomal subunit protein eL37.